A 192-amino-acid polypeptide reads, in one-letter code: MIRISEAAQSHFKKLLADQPDGTCIRVFVVNPGMANAECGVSYCPPDSVEPDDERLPFNGFDAVVDSGSAPFLEDAAIDFEEQEMGSQLTLKAPNAKARKVADDAPLIERVEYVIQAEINPQLASHGGQVMISEITDDGVAILQFGGGCNGCSMIDVTLKNGIEKELLERFPEEVKGVRDITDHEPGEHSYY.

The [4Fe-4S] cluster site is built by Cys-149 and Cys-152.

It belongs to the NfuA family. In terms of assembly, homodimer. The cofactor is [4Fe-4S] cluster.

In terms of biological role, involved in iron-sulfur cluster biogenesis. Binds a 4Fe-4S cluster, can transfer this cluster to apoproteins, and thereby intervenes in the maturation of Fe/S proteins. Could also act as a scaffold/chaperone for damaged Fe/S proteins. The chain is Fe/S biogenesis protein NfuA from Idiomarina loihiensis (strain ATCC BAA-735 / DSM 15497 / L2-TR).